Reading from the N-terminus, the 206-residue chain is Thymidylate kinase (206 aa).

11–18 (GIDGAGKT) contributes to the ATP binding site.

The protein belongs to the thymidylate kinase family.

The catalysed reaction is dTMP + ATP = dTDP + ADP. Functionally, phosphorylation of dTMP to form dTDP in both de novo and salvage pathways of dTTP synthesis. This Burkholderia thailandensis (strain ATCC 700388 / DSM 13276 / CCUG 48851 / CIP 106301 / E264) protein is Thymidylate kinase.